A 346-amino-acid chain; its full sequence is Zinc-type alcohol dehydrogenase-like protein C1773.06c (346 aa).

The protein belongs to the zinc-containing alcohol dehydrogenase family. Quinone oxidoreductase subfamily.

The protein localises to the cytoplasm. The polypeptide is Zinc-type alcohol dehydrogenase-like protein C1773.06c (Schizosaccharomyces pombe (strain 972 / ATCC 24843) (Fission yeast)).